The primary structure comprises 636 residues: 1-deoxy-D-xylulose-5-phosphate synthase (636 aa).

Residues His-74 and 115 to 117 (GHS) contribute to the thiamine diphosphate site. Asp-146 is a binding site for Mg(2+). Thiamine diphosphate-binding positions include 147-148 (GA), Asn-175, Tyr-286, and Glu-367. Asn-175 provides a ligand contact to Mg(2+).

Belongs to the transketolase family. DXPS subfamily. As to quaternary structure, homodimer. Requires Mg(2+) as cofactor. Thiamine diphosphate is required as a cofactor.

The catalysed reaction is D-glyceraldehyde 3-phosphate + pyruvate + H(+) = 1-deoxy-D-xylulose 5-phosphate + CO2. The protein operates within metabolic intermediate biosynthesis; 1-deoxy-D-xylulose 5-phosphate biosynthesis; 1-deoxy-D-xylulose 5-phosphate from D-glyceraldehyde 3-phosphate and pyruvate: step 1/1. Its function is as follows. Catalyzes the acyloin condensation reaction between C atoms 2 and 3 of pyruvate and glyceraldehyde 3-phosphate to yield 1-deoxy-D-xylulose-5-phosphate (DXP). The sequence is that of 1-deoxy-D-xylulose-5-phosphate synthase from Halothermothrix orenii (strain H 168 / OCM 544 / DSM 9562).